The following is a 145-amino-acid chain: Alpha-amylase/trypsin inhibitor CM2 (145 aa).

The N-terminal stretch at 1–25 (MASKSSITHLLLAAVLVSVFAAAAA) is a signal peptide.

This sequence belongs to the protease inhibitor I6 (cereal trypsin/alpha-amylase inhibitor) family. Developing endosperm.

It localises to the secreted. Alpha-amylase/trypsin inhibitor. It could be involved in insect defense mechanisms. This is Alpha-amylase/trypsin inhibitor CM2 from Triticum aestivum (Wheat).